The sequence spans 508 residues: DASH complex subunit ASK1 (508 aa).

2 disordered regions span residues 86-138 (LVDG…TLSS) and 150-355 (SRAA…QLRS). Positions 116–138 (EPSQYTPRPQTSAGGHDTTTLSS) are enriched in polar residues. The span at 161–175 (QHHDDSSVLTDRDGD) shows a compositional bias: basic and acidic residues. The segment covering 201–213 (DEMDIDMDEEDSE) has biased composition (acidic residues). Positions 229-238 (RYYDDDHGFE) are enriched in basic and acidic residues. Residues 239–258 (QGEEEEDEEEEEEEEEEEEG) show a composition bias toward acidic residues. A compositionally biased stretch (basic and acidic residues) spans 326-338 (IKQEDTEKKRPLW).

It belongs to the DASH complex ASK1 family. As to quaternary structure, component of the DASH complex consisting of ASK1, DAD1, DAD2, DAD3, DAD4, DAM1, DUO1, HSK3, SPC19 and SPC34, with a stoichiometry of one copy of each subunit per complex. Multiple DASH complexes oligomerize to form a ring that encircles spindle microtubules and organizes the rod-like NDC80 complexes of the outer kinetochore. On cytoplasmic microtubules, DASH complexes appear to form patches instead of rings.

It localises to the chromosome. The protein resides in the centromere. It is found in the kinetochore. The protein localises to the cytoplasm. Its subcellular location is the cytoskeleton. It localises to the spindle. The protein resides in the nucleus. Functionally, component of the DASH complex that connects microtubules with kinetochores and couples microtubule depolymerisation to chromosome movement; it is involved in retrieving kinetochores to the spindle poles before their re-orientation on the spindle in early mitosis and allows microtubule depolymerization to pull chromosomes apart and resist detachment during anaphase. Kinetochores, consisting of a centromere-associated inner segment and a microtubule-contacting outer segment, play a crucial role in chromosome segregation by mediating the physical connection between centromeric DNA and microtubules. Kinetochores also serve as an input point for the spindle assembly checkpoint, which delays anaphase until all chromosomes have bioriented on the mitotic spindle. This chain is DASH complex subunit ASK1, found in Chaetomium thermophilum (strain DSM 1495 / CBS 144.50 / IMI 039719) (Thermochaetoides thermophila).